We begin with the raw amino-acid sequence, 268 residues long: Phosphatidylglycerol--prolipoprotein diacylglyceryl transferase (268 aa).

The next 7 helical transmembrane spans lie at 27 to 47 (PALR…MWLL), 66 to 86 (LLFY…VLFY), 104 to 124 (GGMS…YIAW), 130 to 150 (FFAV…AGRI), 181 to 201 (PSQL…LYWF), 208 to 228 (VGAV…IVET), and 242 to 262 (FMTM…YLIL). Arginine 149 provides a ligand contact to a 1,2-diacyl-sn-glycero-3-phospho-(1'-sn-glycerol).

Belongs to the Lgt family.

It is found in the cell inner membrane. The enzyme catalyses L-cysteinyl-[prolipoprotein] + a 1,2-diacyl-sn-glycero-3-phospho-(1'-sn-glycerol) = an S-1,2-diacyl-sn-glyceryl-L-cysteinyl-[prolipoprotein] + sn-glycerol 1-phosphate + H(+). It participates in protein modification; lipoprotein biosynthesis (diacylglyceryl transfer). In terms of biological role, catalyzes the transfer of the diacylglyceryl group from phosphatidylglycerol to the sulfhydryl group of the N-terminal cysteine of a prolipoprotein, the first step in the formation of mature lipoproteins. The protein is Phosphatidylglycerol--prolipoprotein diacylglyceryl transferase of Shewanella sp. (strain ANA-3).